The following is a 631-amino-acid chain: KIF-binding protein (631 aa).

Over residues glutamate 60–cysteine 70 the composition is skewed to acidic residues. The segment at glutamate 60–phenylalanine 88 is disordered.

This sequence belongs to the KIF-binding protein family. In terms of tissue distribution, at 30 hpf, primarily expressed in central and peripheral neurons.

It is found in the cytoplasm. The protein resides in the cytoskeleton. Activator of KIF1B plus-end-directed microtubule motor activity. Required for organization of axonal microtubules, and axonal outgrowth and maintenance during peripheral and central nervous system development. The sequence is that of KIF-binding protein (kifbp) from Danio rerio (Zebrafish).